Here is a 667-residue protein sequence, read N- to C-terminus: Probable sulfate permease C320.05 (667 aa).

The disordered stretch occupies residues M1–L27. Over residues F16 to R25 the composition is skewed to polar residues. 12 helical membrane-spanning segments follow: residues I77 to S97, F102 to C122, I162 to F182, G198 to F218, M240 to G260, I275 to F295, Y301 to P321, G336 to L356, L368 to G388, V405 to F425, L433 to F453, and G465 to F485. The STAS domain maps to S532–V657.

Belongs to the SLC26A/SulP transporter (TC 2.A.53) family.

It localises to the endoplasmic reticulum membrane. In terms of biological role, possible sulfate transporter. This is Probable sulfate permease C320.05 from Schizosaccharomyces pombe (strain 972 / ATCC 24843) (Fission yeast).